A 419-amino-acid chain; its full sequence is MMSMNSKQPHFAMHPTLPEHKYPSLHSSSEAIRRACLPTPPLQSNLFASLDETLLARAEALAAVDIAVSQGKSHPFKPDATYHTMNSVPCTSTSTVPLAHHHHHHHHHQALEPGDLLDHISSPSLALMAGAGGAGAAAGGGGAHDGPGGGGGPGGGGGPGGGPGGGGGGGPGGGGGGPGGGLLGGSAHPHPHMHSLGHLSHPAAAAAMNMPSGLPHPGLVAAAAHHGAAAAAAAAAAGQVAAASAAAAVVGAAGLASICDSDTDPRELEAFAERFKQRRIKLGVTQADVGSALANLKIPGVGSLSQSTICRFESLTLSHNNMIALKPILQAWLEEAEGAQREKMNKPELFNGGEKKRKRTSIAAPEKRSLEAYFAVQPRPSSEKIAAIAEKLDLKKNVVRVWFCNQRQKQKRMKFSATY.

Positions 57–66 match the POU-IV box motif; the sequence is RAEALAAVDI. Disordered regions lie at residues 94-117 and 131-197; these read STVP…GDLL and AGGA…HSLG. Residues 99 to 108 are compositionally biased toward basic residues; sequence AHHHHHHHHH. A compositionally biased stretch (gly residues) spans 131–184; it reads AGGAGAAAGGGGAHDGPGGGGGPGGGGGPGGGPGGGGGGGPGGGGGGPGGGLLG. One can recognise a POU-specific domain in the interval 261–338; it reads SDTDPRELEA…LQAWLEEAEG (78 aa). Positions 356 to 415 form a DNA-binding region, homeobox; it reads KRKRTSIAAPEKRSLEAYFAVQPRPSSEKIAAIAEKLDLKKNVVRVWFCNQRQKQKRMKF.

This sequence belongs to the POU transcription factor family. Class-4 subfamily. As to quaternary structure, interacts (via N-terminus) with RIT2; the interaction controls POU4F1 transactivation activity on some neuronal target genes. Isoform 1 interacts with POU4F2; this interaction inhibits both POU4F1 DNA-binding and transcriptional activities. Isoform 1 interacts (C-terminus) with ESR1 (via DNA-binding domain); this interaction decreases the estrogen receptor ESR1 transcriptional activity in a DNA- and ligand 17-beta-estradiol-independent manner. As to expression, expressed in the brain and the retina. Present in the developing brain, spinal cord and eye.

Its subcellular location is the nucleus. It is found in the cytoplasm. In terms of biological role, multifunctional transcription factor with different regions mediating its different effects. Acts by binding (via its C-terminal domain) to sequences related to the consensus octamer motif 5'-ATGCAAAT-3' in the regulatory regions of its target genes. Regulates the expression of specific genes involved in differentiation and survival within a subset of neuronal lineages. It has been shown that activation of some of these genes requires its N-terminal domain, maybe through a neuronal-specific cofactor. Activates BCL2 expression and protects neuronal cells from apoptosis (via the N-terminal domain). Induces neuronal process outgrowth and the coordinate expression of genes encoding synaptic proteins. Exerts its major developmental effects in somatosensory neurons and in brainstem nuclei involved in motor control. Stimulates the binding affinity of the nuclear estrogene receptor ESR1 to DNA estrogen response element (ERE), and hence modulates ESR1-induced transcriptional activity. May positively regulate POU4F2 and POU4F3. Regulates dorsal root ganglion sensory neuron specification and axonal projection into the spinal cord. Plays a role in TNFSF11-mediated terminal osteoclast differentiation. Negatively regulates its own expression interacting directly with a highly conserved autoregulatory domain surrounding the transcription initiation site. Functionally, able to act as transcription factor, cannot regulate the expression of the same subset of genes than isoform 1. Does not have antiapoptotic effect on neuronal cells. In Homo sapiens (Human), this protein is POU domain, class 4, transcription factor 1.